The sequence spans 280 residues: MAAAAPPAGPGLYSDIGKKARDLLYRDYHTDQKFTLTTYAANGAAITVAGTKKNESIFSEIQSQVKNNNVSVDVKATSDSKLITTFTVHDLGTPGLKGILSIPFPYQKSAKAEVQYLHPHAGLNAIVGLNANPLVSFSGVFGTGAFAVGTDVAFDTATGDFTKYNAGLSHTTPDLTAALLLNNKGDSLAASYYHKVSKTSAVGAELAHSFSSNENTLTFGTQHALDELTTVKARFNNFGMASALIQHEFRPKSLVTISTEVDTKAIDKSSKVGLSLVLKP.

This sequence belongs to the eukaryotic mitochondrial porin (TC 1.B.8.1) family. Expressed in roots, stems, leaves, palea, lemma and pollen.

The protein localises to the mitochondrion outer membrane. In terms of biological role, forms a channel through the mitochondrial outer membrane that allows diffusion of small hydrophilic molecules. The channel adopts an open conformation at low or zero membrane potential and a closed conformation at potentials above 30-40 mV. The open state has a weak anion selectivity whereas the closed state is cation-selective. The sequence is that of Mitochondrial outer membrane protein porin 2 (VDAC2) from Oryza sativa subsp. japonica (Rice).